A 243-amino-acid chain; its full sequence is Probable 6-phosphogluconolactonase (243 aa).

The protein belongs to the glucosamine/galactosamine-6-phosphate isomerase family. 6-phosphogluconolactonase subfamily.

The catalysed reaction is 6-phospho-D-glucono-1,5-lactone + H2O = 6-phospho-D-gluconate + H(+). It participates in carbohydrate degradation; pentose phosphate pathway; D-ribulose 5-phosphate from D-glucose 6-phosphate (oxidative stage): step 2/3. Functionally, hydrolysis of 6-phosphogluconolactone to 6-phosphogluconate. This Drosophila melanogaster (Fruit fly) protein is Probable 6-phosphogluconolactonase.